The chain runs to 2313 residues: MEESGPPSNPSPVASRGRGRGRPPKVALSALGNTPPHINPSLKHADAEASPTAPEDQDSGQSECRRSSRKKIIKFDVRDLLNKNRKAHKIQIEARIDSNPSTGHSQSGTTAASTSMSTATASAASASSAATVSRLFSMFEMSHQSLPPPPPPPTALEIFAKPRPTQSLIVAQVTSEPSAVGGAHPVQTMAGLPPVTPRKRGRPRKSQLADAAIIPTVIVPSCSDSDTNSTSTTTSNMSSDSGELPGFPIQKPKSKLRVSLKRLKLGGRLESSDSGNSPSSSSPEVEPPALQDENAMDERPKQEQNLSRMVDAEENSDSDSQIIFIEIETESPKGEEEQEEGRPVEVEPQDLIDIDMELAKQEPTPDPEEDLDEIMVEVLSGPPSLWSADDEAEEEEDATVQRATPPGKEPAADSCSSAPRRSRRSAPLSGSSRQGKTLEETFAEIAAESSKQILEAEESQDQEEQHILIDLIEDTLKSDNIAASLNKDIFEPKVETKATCGEVVPRPEMVTEDVYITEGIAATLEKSAVVTKPTTEMIAETKLSDEVVIEPPLKDESDPKQTEVELPESKPAVNIPKSERILSAEVETTSSPLVPPECCTLESVSGPVLLETSLSTEEKSNENVETTPLKTEAAKEDSPPAAPEEEASNSSEEPNFLLEDYESNQEQVAEDEMMKCNNQKGQKQTPLPEMKEPEKPVAETVSKKEKAMENPARSSPAIVDKKVRAGEMEKKVVKSTKGTVPEKKMDSKKSCAAVTPAKQKESGKSAKEAILKKETEKEKSSAKLDSSSPNTLDKKGKDTAQWSPQLQTLPKSSTKPPQESAPSVISKTTSNQPAPKEEQHAAKKGLSDNSPPSVLKAKEKAVSGFVECDAMFKAMDLANAQLRLDEKNKKKLKKVPTKVEAPPKVEPPTAVPVPGQKKSLSGKTSLRRNTVYEDSPNLERNSSPSSDSAQANTSAGKLKPSKVKKKINPRRSTICEAAKDLRSSSSSSTPTREVAASSPVSTSSDSSSKRNGSKRTTSDLDGGSKLDQRRYTICEDRQPETAIPVPLTKRRFSMHPKASANPLHDTLLQTAGKKRGRKEGKESLSRQNSLDSSSSASQGAPKKKALKSAEILSAALLETESSESTSSGSKMSRWDVQTSPELEAANPFGDIAKFIEDGVNLLKRDKVDEDQRKEGQDEVKREADPEEDEFAQRVANMETPATTPTPSPTQSNPEDSASTTTVLKELETGGGVRRSHRIKQKPQGPRASQGRGVASVALAPISMDEQLAELANIEAINEQFLRSEGLNTFQLLKENFYRCARQVSQENAEMQCDCFLTGDEEAQGHLSCGAGCINRMLMIECGPLCSNGARCTNKRFQQHQCWPCRVFRTEKKGCGITAELLIPPGEFIMEYVGEVIDSEEFERRQHLYSKDRNRHYYFMALRGEAVIDATSKGNISRYINHSCDPNAETQKWTVNGELRIGFFSVKPIQPGEEITFDYQYLRYGRDAQRCYCEAANCRGWIGGEPDSDEGEQLDEESDSDAEMDEEELEAEPEEGQPRKSAKAKAKSKLKAKLPLATGRKRKEQTKPKDREYKAGRWLKPSATGSSSSAEKPPKKPKVNKFQAMLEDPDVVEELSLLRRGGLKNQQDTLRFSRCLVRAKLLKTRLALLRVLTHGELPCRRLFLDYHGLRLLHAWISENGNDDQLREALLDTLESLPIPNRTMLSDSRVYQSVQLWSNSLEQQLAVVPQEKQAALHKRMVALLQKWQALPEIFRIPKRERIEQMKEHEREADRQQKHVHASTALEDQRERESSNDRFRQDRFRRDTTSSRIGKPIRMSGNNTICTITTQQKGSNGAPDGMTRNDNRRRSDIGPPSEQRRTLSKELRRSLFERKVALDEAERRVCTEDRLEHELRCEFFGADINTDPKQLPFYQKTDTNEWFNSDDVPVPAPPRTELLTKALLSPDIDVGQGATDVEYKLPPGVDPLPPAWNWQVTSDGDIYYYNLRERISQWEPPSPEQRLQTLLEENTTQQPLHELQIDPAVLENELIQVDTDYVGSLSAKSLAQYIEAKVRERRDLRRSKLVSIRLISPRRDEDRLYNQLESRKYKENKEKIRRRKELYRRRKIEVLPDAVDEIPVPGKALPIQPYLFSSDEEETKVAAIEQPAAEEEQDSLNMAPSTSHAAMAALGKAVAQPTGLGTVGKRKLPMPPSVTVKKHRQEQRSKKVKSSQSPLTATSAREAHEKFRFEISGHVANFLRPYRKESCTLGRITSDEDYKFLVNRLSYHITTKEMRYCEVSGNPLSCTESVKHKSYDFINQYMRQKGPVYKKPAEND.

6 disordered regions span residues 1–115, 179–442, 550–858, 883–1106, 1118–1150, and 1163–1251; these read MEES…ASTS, AVGG…EETF, EPPL…LKAK, RLDE…KKAL, ETESSESTSSGSKMSRWDVQTSPELEAANPFGD, and KRDK…SQGR. The a.T hook 1 DNA-binding region spans 17 to 29; sequence GRGRGRPPKVALS. Residues 73-82 show a composition bias toward basic and acidic residues; the sequence is IKFDVRDLLN. The segment covering 101–115 has biased composition (low complexity); the sequence is STGHSQSGTTAASTS. A DNA-binding region (a.T hook 2) is located at residues 197–209; sequence PRKRGRPRKSQLA. Residues 221 to 241 show a composition bias toward low complexity; that stretch reads SCSDSDTNSTSTTTSNMSSDS. The segment covering 252-265 has biased composition (basic residues); sequence PKSKLRVSLKRLKL. Positions 266–288 are enriched in low complexity; it reads GGRLESSDSGNSPSSSSPEVEPP. A compositionally biased stretch (basic and acidic residues) spans 330-345; the sequence is ESPKGEEEQEEGRPVE. 3 stretches are compositionally biased toward acidic residues: residues 347-356, 365-375, and 388-398; these read EPQDLIDIDM, PDPEEDLDEIM, and ADDEAEEEEDA. Residue threonine 404 is modified to Phosphothreonine. The segment covering 412 to 433 has biased composition (low complexity); it reads ADSCSSAPRRSRRSAPLSGSSR. Over residues 552-563 the composition is skewed to basic and acidic residues; the sequence is PLKDESDPKQTE. Over residues 659–671 the composition is skewed to acidic residues; it reads EDYESNQEQVAED. A compositionally biased stretch (polar residues) spans 676-685; the sequence is CNNQKGQKQT. Composition is skewed to basic and acidic residues over residues 689 to 708, 719 to 732, 740 to 749, and 758 to 782; these read EMKEPEKPVAETVSKKEKAM, VDKKVRAGEMEKKV, VPEKKMDSKK, and KQKESGKSAKEAILKKETEKEKSSA. 2 positions are modified to phosphoserine: serine 786 and serine 788. Composition is skewed to polar residues over residues 800-833, 918-928, and 938-955; these read AQWSPQLQTLPKSSTKPPQESAPSVISKTTSNQP, KSLSGKTSLRR, and LERNSSPSSDSAQANTSA. The span at 959–969 shows a compositional bias: basic residues; it reads KPSKVKKKINP. Positions 997-1010 are enriched in low complexity; it reads SSPVSTSSDSSSKR. The span at 1016–1039 shows a compositional bias: basic and acidic residues; the sequence is TTSDLDGGSKLDQRRYTICEDRQP. Low complexity-rich tracts occupy residues 1085-1097 and 1118-1127; these read SRQNSLDSSSSAS and ETESSESTSS. Over residues 1163–1183 the composition is skewed to basic and acidic residues; that stretch reads KRDKVDEDQRKEGQDEVKREA. Over residues 1199 to 1213 the composition is skewed to low complexity; sequence TPATTPTPSPTQSNP. Residues 1307-1360 enclose the AWS domain; the sequence is NAEMQCDCFLTGDEEAQGHLSCGAGCINRMLMIECGPLCSNGARCTNKRFQQHQ. Residues cysteine 1312, cysteine 1314, cysteine 1328, cysteine 1332, cysteine 1341, cysteine 1345, and cysteine 1351 each contribute to the Zn(2+) site. In terms of domain architecture, SET spans 1362-1479; sequence WPCRVFRTEK…PGEEITFDYQ (118 aa). S-adenosyl-L-methionine is bound by residues 1415-1417 and 1440-1441; these read HYY and NH. Cysteine 1443 provides a ligand contact to Zn(2+). Residues 1486–1502 enclose the Post-SET domain; sequence DAQRCYCEAANCRGWIG. S-adenosyl-L-methionine is bound at residue glutamine 1488. Residue cysteine 1490 coordinates Zn(2+). Residue tyrosine 1491 coordinates S-adenosyl-L-methionine. Zn(2+)-binding residues include cysteine 1492 and cysteine 1497. Disordered regions lie at residues 1501–1598 and 1763–1860; these read IGGE…KPKV and MKEH…RRTL. Positions 1505–1534 are enriched in acidic residues; the sequence is PDSDEGEQLDEESDSDAEMDEEELEAEPEE. Positions 1539-1551 are enriched in basic residues; the sequence is KSAKAKAKSKLKA. Basic and acidic residues-rich tracts occupy residues 1564-1574, 1763-1774, and 1784-1806; these read QTKPKDREYKA, MKEHEREADRQQ, and EDQRERESSNDRFRQDRFRRDTT. Residues 1817-1832 are compositionally biased toward polar residues; it reads SGNNTICTITTQQKGS. Residues 1840–1860 show a composition bias toward basic and acidic residues; it reads TRNDNRRRSDIGPPSEQRRTL. Positions 1963 to 1996 constitute a WW domain; that stretch reads DPLPPAWNWQVTSDGDIYYYNLRERISQWEPPSP. Serine 2130 and serine 2131 each carry phosphoserine. The tract at residues 2177–2218 is disordered; that stretch reads LGTVGKRKLPMPPSVTVKKHRQEQRSKKVKSSQSPLTATSAR. The span at 2193–2206 shows a compositional bias: basic residues; sequence VKKHRQEQRSKKVK. Residues 2207-2216 are compositionally biased toward polar residues; that stretch reads SSQSPLTATS.

Belongs to the class V-like SAM-binding methyltransferase superfamily. Histone-lysine methyltransferase family. SET2 subfamily. In terms of assembly, interacts with (phosphorylated) Polr2A.

It is found in the nucleus. Its subcellular location is the chromosome. It carries out the reaction L-lysyl(36)-[histone H3] + 3 S-adenosyl-L-methionine = N(6),N(6),N(6)-trimethyl-L-lysyl(36)-[histone H3] + 3 S-adenosyl-L-homocysteine + 3 H(+). Functionally, histone methyltransferase that specifically trimethylates 'Lys-36' of histone H3 (H3K36me3). Represents the main enzyme generating H3K36me3, a specific tag for epigenetic transcriptional activation. Involved in dosage compensation in males (X chromosome dosage compensation) by mediating formation of H3K36me3, a mark recognized by msl-3 component of the MSL complex. In addition to its role in dosage compensation in males, promotes germline stem cell differentiation in females: catalyzes formation of H3K36me3, promoting recruitment of msl-3 and subsequent recruitment of the ATAC complex, leading to transcription of genes, such as RpS19b. This is Histone-lysine N-methyltransferase Set2 from Drosophila melanogaster (Fruit fly).